The sequence spans 146 residues: Deoxyuridine 5'-triphosphate nucleotidohydrolase (146 aa).

Substrate is bound by residues 66–68 (RSG), Asn-79, 83–85 (TID), and Lys-93.

The protein belongs to the dUTPase family. The cofactor is Mg(2+).

The enzyme catalyses dUTP + H2O = dUMP + diphosphate + H(+). It participates in pyrimidine metabolism; dUMP biosynthesis; dUMP from dCTP (dUTP route): step 2/2. Its function is as follows. This enzyme is involved in nucleotide metabolism: it produces dUMP, the immediate precursor of thymidine nucleotides and it decreases the intracellular concentration of dUTP so that uracil cannot be incorporated into DNA. The sequence is that of Deoxyuridine 5'-triphosphate nucleotidohydrolase from Zymomonas mobilis subsp. mobilis (strain ATCC 31821 / ZM4 / CP4).